A 439-amino-acid chain; its full sequence is Tol-Pal system protein TolB (439 aa).

The first 21 residues, 1 to 21 (MRFRLALSLLSLALFAAPAAA), serve as a signal peptide directing secretion.

The protein belongs to the TolB family. In terms of assembly, the Tol-Pal system is composed of five core proteins: the inner membrane proteins TolA, TolQ and TolR, the periplasmic protein TolB and the outer membrane protein Pal. They form a network linking the inner and outer membranes and the peptidoglycan layer.

It localises to the periplasm. Functionally, part of the Tol-Pal system, which plays a role in outer membrane invagination during cell division and is important for maintaining outer membrane integrity. The chain is Tol-Pal system protein TolB from Rhizorhabdus wittichii (strain DSM 6014 / CCUG 31198 / JCM 15750 / NBRC 105917 / EY 4224 / RW1) (Sphingomonas wittichii).